The sequence spans 249 residues: Ribonucleoprotein 1 (249 aa).

RRM domains lie at 35–114 (RTLY…NILT) and 140–231 (NTLY…IASA).

The chain is Ribonucleoprotein 1 (RNP1) from Saccharomyces cerevisiae (strain ATCC 204508 / S288c) (Baker's yeast).